Reading from the N-terminus, the 373-residue chain is tRNA-specific 2-thiouridylase MnmA (373 aa).

ATP-binding positions include 12–19 (GMSGGVDS) and methionine 38. The segment at 98–100 (NPD) is interaction with target base in tRNA. The active-site Nucleophile is the cysteine 103. The cysteines at positions 103 and 200 are disulfide-linked. Glycine 127 contributes to the ATP binding site. The interaction with tRNA stretch occupies residues 150-152 (KDQ). Cysteine 200 serves as the catalytic Cysteine persulfide intermediate. Positions 312 to 313 (RY) are interaction with tRNA.

The protein belongs to the MnmA/TRMU family.

It is found in the cytoplasm. The enzyme catalyses S-sulfanyl-L-cysteinyl-[protein] + uridine(34) in tRNA + AH2 + ATP = 2-thiouridine(34) in tRNA + L-cysteinyl-[protein] + A + AMP + diphosphate + H(+). Functionally, catalyzes the 2-thiolation of uridine at the wobble position (U34) of tRNA, leading to the formation of s(2)U34. The sequence is that of tRNA-specific 2-thiouridylase MnmA from Streptococcus agalactiae serotype III (strain NEM316).